The sequence spans 1013 residues: GPI ethanolamine phosphate transferase 3 (1013 aa).

A helical membrane pass occupies residues 41 to 61 (TLYIFLYSALAALQFIAIAFF). N-linked (GlcNAc...) asparagine glycans are attached at residues Asn184, Asn205, Asn336, Asn399, and Asn423. 3 consecutive transmembrane segments (helical) span residues 447 to 467 (YYSI…LITI), 484 to 504 (VPTI…VFYV), and 515 to 535 (LWAS…VPIF). Asn539 carries an N-linked (GlcNAc...) asparagine glycan. The next 4 membrane-spanning stretches (helical) occupy residues 558–578 (VAAF…FTIW), 582–602 (IVSF…VFLP), 643–663 (IVGG…SLIT), and 682–702 (NYSF…PACI). Asn707 is a glycosylation site (N-linked (GlcNAc...) asparagine). Residues 715–735 (AAPIWIGMLMKSILFVNFIYW) form a helical membrane-spanning segment. N-linked (GlcNAc...) asparagine glycosylation is found at Asn742, Asn750, and Asn755. The next 7 membrane-spanning stretches (helical) occupy residues 761–781 (IVVG…PLCI), 802–822 (NAYG…ILLF), 825–845 (PLAQ…LEIF), 868–888 (FFST…GFIL), 899–919 (LGIV…VALL), 943–963 (GMLL…VTNF), and 977–997 (FMFA…ITIA).

The protein belongs to the PIGG/PIGN/PIGO family. PIGO subfamily.

Its subcellular location is the endoplasmic reticulum membrane. It functions in the pathway glycolipid biosynthesis; glycosylphosphatidylinositol-anchor biosynthesis. Functionally, involved in glycosylphosphatidylinositol-anchor biosynthesis. Transfers ethanolamine phosphate to the GPI third mannose which links the GPI-anchor to the C-terminus of the proteins by an amide bond. Involved in cell wall biosynthesis. This Eremothecium gossypii (strain ATCC 10895 / CBS 109.51 / FGSC 9923 / NRRL Y-1056) (Yeast) protein is GPI ethanolamine phosphate transferase 3 (GPI13).